The chain runs to 278 residues: TATA box-binding protein-associated factor RNA polymerase I subunit D (278 aa).

Disordered stretches follow at residues 20–71 and 88–116; these read ANRS…SSFE and KKRYKKKKKRRYQPTGRPRGRPEGRRNPI. The span at 22-33 shows a compositional bias: polar residues; sequence RSDNSSDSSLFK. At Ser-23 the chain carries Phosphoserine. Basic residues predominate over residues 88 to 99; it reads KKRYKKKKKRRY. Ser-138 and Ser-234 each carry phosphoserine.

In terms of assembly, component of the transcription factor SL1/TIF-IB complex, composed of TBP and at least TAF1A, TAF1B, TAF1C and TAF1D. Interacts with UBTF.

Its subcellular location is the nucleus. Functionally, component of the transcription factor SL1/TIF-IB complex, which is involved in the assembly of the PIC (preinitiation complex) during RNA polymerase I-dependent transcription. The rate of PIC formation probably is primarily dependent on the rate of association of SL1/TIF-IB with the rDNA promoter. SL1/TIF-IB is involved in stabilization of nucleolar transcription factor 1/UBTF on rDNA. Formation of SL1/TIF-IB excludes the association of TBP with TFIID subunits. The chain is TATA box-binding protein-associated factor RNA polymerase I subunit D (TAF1D) from Homo sapiens (Human).